A 240-amino-acid polypeptide reads, in one-letter code: Ribonuclease PH (240 aa).

Phosphate is bound by residues Arg-87 and 125–127; that span reads GTR.

The protein belongs to the RNase PH family. Homohexameric ring arranged as a trimer of dimers.

It catalyses the reaction tRNA(n+1) + phosphate = tRNA(n) + a ribonucleoside 5'-diphosphate. Phosphorolytic 3'-5' exoribonuclease that plays an important role in tRNA 3'-end maturation. Removes nucleotide residues following the 3'-CCA terminus of tRNAs; can also add nucleotides to the ends of RNA molecules by using nucleoside diphosphates as substrates, but this may not be physiologically important. Probably plays a role in initiation of 16S rRNA degradation (leading to ribosome degradation) during starvation. The protein is Ribonuclease PH of Pseudomonas fluorescens (strain SBW25).